Consider the following 518-residue polypeptide: ATP synthase subunit alpha (518 aa).

169–176 (GDRQTGKT) contacts ATP.

It belongs to the ATPase alpha/beta chains family. F-type ATPases have 2 components, CF(1) - the catalytic core - and CF(0) - the membrane proton channel. CF(1) has five subunits: alpha(3), beta(3), gamma(1), delta(1), epsilon(1). CF(0) has three main subunits: a(1), b(2) and c(9-12). The alpha and beta chains form an alternating ring which encloses part of the gamma chain. CF(1) is attached to CF(0) by a central stalk formed by the gamma and epsilon chains, while a peripheral stalk is formed by the delta and b chains.

The protein resides in the cell membrane. The enzyme catalyses ATP + H2O + 4 H(+)(in) = ADP + phosphate + 5 H(+)(out). Its function is as follows. Produces ATP from ADP in the presence of a proton gradient across the membrane. The alpha chain is a regulatory subunit. The protein is ATP synthase subunit alpha of Mycoplasma genitalium (strain ATCC 33530 / DSM 19775 / NCTC 10195 / G37) (Mycoplasmoides genitalium).